Here is a 210-residue protein sequence, read N- to C-terminus: Thiamine-phosphate synthase (210 aa).

4-amino-2-methyl-5-(diphosphooxymethyl)pyrimidine contacts are provided by residues 39 to 43 (QLREK) and asparagine 71. Mg(2+) contacts are provided by aspartate 72 and aspartate 91. Position 110 (serine 110) interacts with 4-amino-2-methyl-5-(diphosphooxymethyl)pyrimidine. Residue 134 to 136 (TPT) coordinates 2-[(2R,5Z)-2-carboxy-4-methylthiazol-5(2H)-ylidene]ethyl phosphate. Lysine 137 contributes to the 4-amino-2-methyl-5-(diphosphooxymethyl)pyrimidine binding site. Glycine 163 provides a ligand contact to 2-[(2R,5Z)-2-carboxy-4-methylthiazol-5(2H)-ylidene]ethyl phosphate.

This sequence belongs to the thiamine-phosphate synthase family. The cofactor is Mg(2+).

The enzyme catalyses 2-[(2R,5Z)-2-carboxy-4-methylthiazol-5(2H)-ylidene]ethyl phosphate + 4-amino-2-methyl-5-(diphosphooxymethyl)pyrimidine + 2 H(+) = thiamine phosphate + CO2 + diphosphate. It carries out the reaction 2-(2-carboxy-4-methylthiazol-5-yl)ethyl phosphate + 4-amino-2-methyl-5-(diphosphooxymethyl)pyrimidine + 2 H(+) = thiamine phosphate + CO2 + diphosphate. It catalyses the reaction 4-methyl-5-(2-phosphooxyethyl)-thiazole + 4-amino-2-methyl-5-(diphosphooxymethyl)pyrimidine + H(+) = thiamine phosphate + diphosphate. It functions in the pathway cofactor biosynthesis; thiamine diphosphate biosynthesis; thiamine phosphate from 4-amino-2-methyl-5-diphosphomethylpyrimidine and 4-methyl-5-(2-phosphoethyl)-thiazole: step 1/1. Its function is as follows. Condenses 4-methyl-5-(beta-hydroxyethyl)thiazole monophosphate (THZ-P) and 2-methyl-4-amino-5-hydroxymethyl pyrimidine pyrophosphate (HMP-PP) to form thiamine monophosphate (TMP). In Campylobacter jejuni subsp. jejuni serotype O:2 (strain ATCC 700819 / NCTC 11168), this protein is Thiamine-phosphate synthase.